Reading from the N-terminus, the 459-residue chain is Argininosuccinate lyase (459 aa).

The protein belongs to the lyase 1 family. Argininosuccinate lyase subfamily.

The protein resides in the cytoplasm. It carries out the reaction 2-(N(omega)-L-arginino)succinate = fumarate + L-arginine. It participates in amino-acid biosynthesis; L-arginine biosynthesis; L-arginine from L-ornithine and carbamoyl phosphate: step 3/3. This chain is Argininosuccinate lyase, found in Staphylococcus saprophyticus subsp. saprophyticus (strain ATCC 15305 / DSM 20229 / NCIMB 8711 / NCTC 7292 / S-41).